The chain runs to 565 residues: Dihydroxy-acid dehydratase (565 aa).

D80 is a binding site for Mg(2+). C121 serves as a coordination point for [2Fe-2S] cluster. The Mg(2+) site is built by D122 and K123. An N6-carboxylysine modification is found at K123. Position 194 (C194) interacts with [2Fe-2S] cluster. E447 lines the Mg(2+) pocket. S473 functions as the Proton acceptor in the catalytic mechanism.

Belongs to the IlvD/Edd family. As to quaternary structure, homodimer. The cofactor is [2Fe-2S] cluster. Requires Mg(2+) as cofactor.

It carries out the reaction (2R)-2,3-dihydroxy-3-methylbutanoate = 3-methyl-2-oxobutanoate + H2O. The catalysed reaction is (2R,3R)-2,3-dihydroxy-3-methylpentanoate = (S)-3-methyl-2-oxopentanoate + H2O. Its pathway is amino-acid biosynthesis; L-isoleucine biosynthesis; L-isoleucine from 2-oxobutanoate: step 3/4. It functions in the pathway amino-acid biosynthesis; L-valine biosynthesis; L-valine from pyruvate: step 3/4. Its function is as follows. Functions in the biosynthesis of branched-chain amino acids. Catalyzes the dehydration of (2R,3R)-2,3-dihydroxy-3-methylpentanoate (2,3-dihydroxy-3-methylvalerate) into 2-oxo-3-methylpentanoate (2-oxo-3-methylvalerate) and of (2R)-2,3-dihydroxy-3-methylbutanoate (2,3-dihydroxyisovalerate) into 2-oxo-3-methylbutanoate (2-oxoisovalerate), the penultimate precursor to L-isoleucine and L-valine, respectively. This is Dihydroxy-acid dehydratase from Chlorobium luteolum (strain DSM 273 / BCRC 81028 / 2530) (Pelodictyon luteolum).